An 83-amino-acid polypeptide reads, in one-letter code: Hainantoxin-III 12 (83 aa).

The first 21 residues, 1 to 21 (MKASMFLALAGLVLLFVVGYA), serve as a signal peptide directing secretion. Positions 22 to 48 (SGSEEKEFPRELLSKIFAVDDFKGEER) are excised as a propeptide. 3 cysteine pairs are disulfide-bonded: cysteine 50-cysteine 65, cysteine 57-cysteine 70, and cysteine 64-cysteine 77. Leucine 81 carries the leucine amide modification.

It belongs to the neurotoxin 10 (Hwtx-1) family. 15 (Hntx-3) subfamily. Monomer. Expressed by the venom gland.

Its subcellular location is the secreted. Selective antagonist of neuronal tetrodotoxin (TTX)-sensitive voltage-gated sodium channels (IC(50)=1270 nM on Nav1.1/SCN1A, 270 nM on Nav1.2/SCN2A, 491 nM on Nav1.3/SCN3A and 232 nM on Nav1.7/SCN9A). This toxin suppress Nav1.7 current amplitude without significantly altering the activation, inactivation, and repriming kinetics. Short extreme depolarizations partially activate the toxin-bound channel, indicating voltage-dependent inhibition of this toxin. This toxin increases the deactivation of the Nav1.7 current after extreme depolarizations. The toxin-Nav1.7 complex is gradually dissociated upon prolonged strong depolarizations in a voltage-dependent manner, and the unbound toxin rebinds to Nav1.7 after a long repolarization. Moreover, analysis of chimeric channels showed that the DIIS3-S4 linker is critical for toxin binding to Nav1.7. These data are consistent with this toxin interacting with Nav1.7 site 4 and trapping the domain II voltage sensor in the closed state. The protein is Hainantoxin-III 12 of Cyriopagopus hainanus (Chinese bird spider).